A 927-amino-acid chain; its full sequence is MEEPGGLHESAEDLFHFNVGGWHFSVPRSKLAQFPDSLLWKEASALTSSENQRLFIDRDGSTFRHVHYYLYTSKLSFSSCAELNLLYEQALGLQLMPLLQTLDNLKEGRHHLRVRPADIPVAERASLNYWRTWKCISKPSDFPIKSPAFTGLHDKAPLGLMDTPLLDTEEEVHYCFLPLDLVAKYPSLVTEDNLLWLAETVALIECECSEFRFIVNFLRSHKILLPDNFSNIDVLEAEVEILEIPELTEAVRLYRMNMGGCSRTSCPPLSPGKGGRTASVESVKPLYLMALGLLVKYPDSALGQLRIESTLDGSRLYITGNGALFQHVRNWLGTCRLPLTETISEVYELCAFLDKRDITYEPMKVALKTHLEPRTLLPVDVLSEEWTAEVTIYSPQQIIKLYVGSHWYATTLQTLMKYPELLSNTQRVYWIAYGQTLLIHGDGQMFRHILNFLRLGKLFLPSEFKEWPLFCQEVEEYHIPALSEALAQCEAYKSWTQEKESENEEAFPIRKLHVVTEGTGPMAEFSRDAKETTACMPVDFQECSDRTPWNKAKGNLTRSSQMEEAEQYTRTIQVSLCRNAKRGGNPSTYSHCSGLCANPRHWGGHSESPPKKKCTTINLTQKPDAKDPPVTPMQKLISLVREWDMVNCKQWEFQPLPASRSSSVEEASLHVPSGSEAAPQPGTSAAWKAHSITSEKDAGPQTGPGAGVKDKGPEPTFKPYFPTKRAITLKDWGKQRPKDRESPAPEQPLPNANGTDNPGAILKVAHPPVVGNDGSCMFFEDSIIYTTQMDNIKHTSLTASPQLREVTFLSFSLSWEEMFYAQKCHRFLTDIILDSIRQKDPKAITAKVVSLAYRLWTLNISPKQFVVDLLAIAGFKDDRHTQERLYSWVELTLPFARKYGRCVDLLIQRGLSRSVSYSVLGKYLHEG.

Residues 18-72 enclose the BTB 1 domain; sequence NVGGWHFSVPRSKLAQFPDSLLWKEASALTSSENQRLFIDRDGSTFRHVHYYLYT. The residue at position 270 (serine 270) is a Phosphoserine. In terms of domain architecture, BTB 2 spans 399-486; it reads IKLYVGSHWY…YHIPALSEAL (88 aa). Positions 664 to 760 are disordered; that stretch reads VEEASLHVPS…NANGTDNPGA (97 aa). A compositionally biased stretch (basic and acidic residues) spans 731-743; it reads DWGKQRPKDRESP.

Identified in a complex with ZNF541, HDAC1 and HSPA2. Identified in a complex with ZNF541 and HDAC1. Identified in a complex with HDAC1, HDAC2, DNTTIP1 and ZNF541. Detected in adult testis.

The protein localises to the nucleus. Functionally, transcription regulator which is essential for male fertility and for the completion of meiotic prophase in spermatocytes. Regulates progression of the pachytene stage of meiotic prophase and promotes the transcriptional activation activity ZNF541. Required for the organization of chromosomes during metaphase I. This is BTB/POZ domain-containing protein KCTD19 (Kctd19) from Mus musculus (Mouse).